Consider the following 106-residue polypeptide: MRSMIDNLTVQSEHLNSLASQHENEAACASSGVSAAAGLANAVSTSHGSYCAQFNDTLKMYEDAHRTLGESLHTGGIDLARVLRVAAAMYCDADEICGSDIKSAFG.

The protein belongs to the EspC family.

This Mycobacterium leprae (strain TN) protein is EspC protein homolog.